The primary structure comprises 355 residues: Heme A synthase (355 aa).

8 consecutive transmembrane segments (helical) span residues 21–41, 85–102, 136–156, 173–193, 208–228, 264–284, 299–319, and 322–342; these read LARWLWAVALLVIIVVGVGGI, INLGMTLAGFKAIFFWEW, LFALTALVGLQGAIGWWMVAS, LLTALFLLAGLVWTARDLGAL, AIGVIAILFVQLLLGAWVAGL, FLIHFLHRWWSWAAAGALLLL, ALVIVVAAQMLLGIWTIVSGV, and WVAVMHQVVGAILVAVTAAAL. Residue His270 participates in heme binding. His327 serves as a coordination point for heme.

The protein belongs to the COX15/CtaA family. Type 2 subfamily. Interacts with CtaB. Heme b is required as a cofactor.

It is found in the cell membrane. It carries out the reaction Fe(II)-heme o + 2 A + H2O = Fe(II)-heme a + 2 AH2. It functions in the pathway porphyrin-containing compound metabolism; heme A biosynthesis; heme A from heme O: step 1/1. Functionally, catalyzes the conversion of heme O to heme A by two successive hydroxylations of the methyl group at C8. The first hydroxylation forms heme I, the second hydroxylation results in an unstable dihydroxymethyl group, which spontaneously dehydrates, resulting in the formyl group of heme A. The protein is Heme A synthase of Sphingopyxis alaskensis (strain DSM 13593 / LMG 18877 / RB2256) (Sphingomonas alaskensis).